Reading from the N-terminus, the 436-residue chain is Prenyltransferase nscD (436 aa).

The protein belongs to the tryptophan dimethylallyltransferase family.

It participates in secondary metabolite biosynthesis. Its function is as follows. Prenyltransferase; part of the gene cluster that mediates the biosynthesis of neosartoricin B, a prenylated anthracenone that probably exhibits T-cell antiproliferative activity, suggestive of a physiological role as an immunosuppressive agent. The non-reducing polyketide synthase nscA probably synthesizes and cyclizes the decaketide backbone. The hydrolase nscB then mediates the product release through hydrolysis followed by spontaneous decarboxylation. The prenyltransferase nscD catalyzes the addition of the dimethylallyl group to the aromatic C5. The FAD-dependent monooxygenase nscC is then responsible for the stereospecific hydroxylation at C2. Neosartoricin B can be converted into two additional compounds neosartoricins C and D. Neosartoricin C is a spirocyclic compound that is cyclized through the attack of C3 hydroxyl on C14, followed by dehydration. On the other hand, neosartoricin D is a further cyclized compound in which attack of C2 on C14 in neosartoricin C results in the formation of the acetal-containing dioxabicyclo-octanone ring. Both of these compounds are novel and possibly represent related metabolites of the gene cluster. This is Prenyltransferase nscD from Trichophyton tonsurans (strain CBS 112818) (Scalp ringworm fungus).